The primary structure comprises 287 residues: Beta-lactamase GES-5 (287 aa).

Positions Met1–Ala18 are cleaved as a signal peptide. A disulfide bridge links Cys63 with Cys233. Catalysis depends on Ser64, which acts as the Nucleophile; acyl-ester intermediate. The imipenem site is built by Ser64, Ser125, Asn127, Thr230, Thr232, and Arg238.

It belongs to the class-A beta-lactamase family.

It is found in the secreted. It carries out the reaction a beta-lactam + H2O = a substituted beta-amino acid. Its activity is regulated as follows. Inhibited by the beta-lactamase-blocking agents clavulanic acid, sulbactam and tazobactam, via a covalent binding to Ser-64. In terms of biological role, confers resistance to penicillins, cephalosporins and carbapenems. Has carbapenem-hydrolyzing activity. The polypeptide is Beta-lactamase GES-5 (Klebsiella pneumoniae).